The following is a 185-amino-acid chain: Peptidyl-tRNA hydrolase (185 aa).

Tyr-15 serves as a coordination point for tRNA. His-20 serves as the catalytic Proton acceptor. 3 residues coordinate tRNA: Tyr-64, Asn-66, and Asn-112.

It belongs to the PTH family. Monomer.

The protein localises to the cytoplasm. The enzyme catalyses an N-acyl-L-alpha-aminoacyl-tRNA + H2O = an N-acyl-L-amino acid + a tRNA + H(+). Functionally, hydrolyzes ribosome-free peptidyl-tRNAs (with 1 or more amino acids incorporated), which drop off the ribosome during protein synthesis, or as a result of ribosome stalling. In terms of biological role, catalyzes the release of premature peptidyl moieties from peptidyl-tRNA molecules trapped in stalled 50S ribosomal subunits, and thus maintains levels of free tRNAs and 50S ribosomes. The sequence is that of Peptidyl-tRNA hydrolase from Porphyromonas gingivalis (strain ATCC BAA-308 / W83).